The primary structure comprises 236 residues: Phosphoribosylaminoimidazole-succinocarboxamide synthase (236 aa).

Belongs to the SAICAR synthetase family.

It catalyses the reaction 5-amino-1-(5-phospho-D-ribosyl)imidazole-4-carboxylate + L-aspartate + ATP = (2S)-2-[5-amino-1-(5-phospho-beta-D-ribosyl)imidazole-4-carboxamido]succinate + ADP + phosphate + 2 H(+). It participates in purine metabolism; IMP biosynthesis via de novo pathway; 5-amino-1-(5-phospho-D-ribosyl)imidazole-4-carboxamide from 5-amino-1-(5-phospho-D-ribosyl)imidazole-4-carboxylate: step 1/2. This is Phosphoribosylaminoimidazole-succinocarboxamide synthase from Rickettsia canadensis (strain McKiel).